We begin with the raw amino-acid sequence, 52 residues long: ATP synthase F(0) complex subunit 8 (52 aa).

Residues 10 to 30 form a helical membrane-spanning segment; that stretch reads LMTHLWAWLMLYLTTQKIKTF.

It belongs to the ATPase protein 8 family. Component of the ATP synthase complex composed at least of ATP5F1A/subunit alpha, ATP5F1B/subunit beta, ATP5MC1/subunit c (homooctomer), MT-ATP6/subunit a, MT-ATP8/subunit 8, ATP5ME/subunit e, ATP5MF/subunit f, ATP5MG/subunit g, ATP5MK/subunit k, ATP5MJ/subunit j, ATP5F1C/subunit gamma, ATP5F1D/subunit delta, ATP5F1E/subunit epsilon, ATP5PF/subunit F6, ATP5PB/subunit b, ATP5PD/subunit d, ATP5PO/subunit OSCP. ATP synthase complex consists of a soluble F(1) head domain (subunits alpha(3) and beta(3)) - the catalytic core - and a membrane F(0) domain - the membrane proton channel (subunits c, a, 8, e, f, g, k and j). These two domains are linked by a central stalk (subunits gamma, delta, and epsilon) rotating inside the F1 region and a stationary peripheral stalk (subunits F6, b, d, and OSCP).

The protein resides in the mitochondrion membrane. Its function is as follows. Subunit 8, of the mitochondrial membrane ATP synthase complex (F(1)F(0) ATP synthase or Complex V) that produces ATP from ADP in the presence of a proton gradient across the membrane which is generated by electron transport complexes of the respiratory chain. ATP synthase complex consist of a soluble F(1) head domain - the catalytic core - and a membrane F(1) domain - the membrane proton channel. These two domains are linked by a central stalk rotating inside the F(1) region and a stationary peripheral stalk. During catalysis, ATP synthesis in the catalytic domain of F(1) is coupled via a rotary mechanism of the central stalk subunits to proton translocation. In vivo, can only synthesize ATP although its ATP hydrolase activity can be activated artificially in vitro. Part of the complex F(0) domain. This is ATP synthase F(0) complex subunit 8 from Lycodon semicarinatus (Ryukyu odd-tooth snake).